The chain runs to 223 residues: Endonuclease V (223 aa).

Mg(2+) is bound by residues Asp35 and Asp103.

The protein belongs to the endonuclease V family. Mg(2+) serves as cofactor.

It localises to the cytoplasm. The enzyme catalyses Endonucleolytic cleavage at apurinic or apyrimidinic sites to products with a 5'-phosphate.. Functionally, DNA repair enzyme involved in the repair of deaminated bases. Selectively cleaves double-stranded DNA at the second phosphodiester bond 3' to a deoxyinosine leaving behind the intact lesion on the nicked DNA. In Salmonella enteritidis PT4 (strain P125109), this protein is Endonuclease V.